A 1770-amino-acid polypeptide reads, in one-letter code: Transposon Ty2-DR2 Gag-Pol polyprotein (1770 aa).

Composition is skewed to polar residues over residues 1-39 and 49-60; these read MESQ…SASN and KVNSQEETTPGT. Disordered stretches follow at residues 1–89 and 360–449; these read MESQ…QQHG and HSEY…SNDE. The tract at residues 295 to 397 is RNA-binding; the sequence is ENNINVSDRL…SSKPRAAKAH (103 aa). Residues 369–381 are compositionally biased toward low complexity; sequence TSPNTTNTKVTTR. Polar residues-rich tracts occupy residues 399–408 and 415–435; these read IATSSKFSRV and ESTV…GQQQ. D457 functions as the For protease activity; shared with dimeric partner in the catalytic mechanism. Residues 579–636 form an integrase-type zinc finger-like region; it reads NVNKSKSVNKYPYPLIHRMLGHANFRSIQKSLKKNAVTYLKESDIEWSNASTYQCPDC. One can recognise an Integrase catalytic domain in the interval 656 to 831; that stretch reads ESYEPFQYLH…AGLDITTILP (176 aa). Mg(2+) is bound by residues D667 and D732. Disordered stretches follow at residues 1005–1038, 1059–1135, and 1171–1222; these read GGTI…MIDL, TEEP…KSSK, and SRQT…LEPP. 2 stretches are compositionally biased toward polar residues: residues 1009-1024 and 1065-1082; these read ESDT…FTAR and QRNS…STPS. Positions 1193-1227 match the Bipartite nuclear localization signal motif; that stretch reads KKRSLEDNETEIEVSRDTWNNKNMRSLEPPRSKKR. The 139-residue stretch at 1353–1491 folds into the Reverse transcriptase Ty1/copia-type domain; the sequence is NDYYITQLDI…DILGLEIKYQ (139 aa). Mg(2+)-binding residues include D1361, D1442, D1443, D1625, E1667, and D1700. An RNase H Ty1/copia-type domain is found at 1625–1767; sequence DASYGNQPYY…IKTFKLLTNK (143 aa).

The capsid protein forms a homotrimer, from which the VLPs are assembled. The protease is a homodimer, whose active site consists of two apposed aspartic acid residues. Post-translationally, initially, virus-like particles (VLPs) are composed of the structural unprocessed proteins Gag and Gag-Pol, and also contain the host initiator methionine tRNA (tRNA(i)-Met) which serves as a primer for minus-strand DNA synthesis, and a dimer of genomic Ty RNA. Processing of the polyproteins occurs within the particle and proceeds by an ordered pathway, called maturation. First, the protease (PR) is released by autocatalytic cleavage of the Gag-Pol polyprotein, and this cleavage is a prerequisite for subsequent processing at the remaining sites to release the mature structural and catalytic proteins. Maturation takes place prior to the RT reaction and is required to produce transposition-competent VLPs.

It is found in the cytoplasm. Its subcellular location is the nucleus. The catalysed reaction is DNA(n) + a 2'-deoxyribonucleoside 5'-triphosphate = DNA(n+1) + diphosphate. It catalyses the reaction Endonucleolytic cleavage to 5'-phosphomonoester.. In terms of biological role, capsid protein (CA) is the structural component of the virus-like particle (VLP), forming the shell that encapsulates the retrotransposons dimeric RNA genome. The particles are assembled from trimer-clustered units and there are holes in the capsid shells that allow for the diffusion of macromolecules. CA also has nucleocapsid-like chaperone activity, promoting primer tRNA(i)-Met annealing to the multipartite primer-binding site (PBS), dimerization of Ty2 RNA and initiation of reverse transcription. Its function is as follows. The aspartyl protease (PR) mediates the proteolytic cleavages of the Gag and Gag-Pol polyproteins after assembly of the VLP. Functionally, reverse transcriptase/ribonuclease H (RT) is a multifunctional enzyme that catalyzes the conversion of the retro-elements RNA genome into dsDNA within the VLP. The enzyme displays a DNA polymerase activity that can copy either DNA or RNA templates, and a ribonuclease H (RNase H) activity that cleaves the RNA strand of RNA-DNA heteroduplexes during plus-strand synthesis and hydrolyzes RNA primers. The conversion leads to a linear dsDNA copy of the retrotransposon that includes long terminal repeats (LTRs) at both ends. Integrase (IN) targets the VLP to the nucleus, where a subparticle preintegration complex (PIC) containing at least integrase and the newly synthesized dsDNA copy of the retrotransposon must transit the nuclear membrane. Once in the nucleus, integrase performs the integration of the dsDNA into the host genome. In Saccharomyces cerevisiae (strain ATCC 204508 / S288c) (Baker's yeast), this protein is Transposon Ty2-DR2 Gag-Pol polyprotein (TY2B-DR2).